A 500-amino-acid chain; its full sequence is Protein shisa-6 (500 aa).

An N-terminal signal peptide occupies residues 1–25 (MALRRLLLLLLLSLESLDLLPSVHG). At 26 to 174 (ARGRAANRTL…NKYDPEKDKT (149 aa)) the chain is on the extracellular side. Asn32 and Asn59 each carry an N-linked (GlcNAc...) asparagine glycan. Residues 52–73 (ARGGRELNGTARAPGIPEAGSR) are disordered. The helical transmembrane segment at 175–195 (NFTVYITCGVIAFVIVAGVFA) threads the bilayer. The Cytoplasmic portion of the chain corresponds to 196-500 (KVSYDKAHRP…YTASKTEVTV (305 aa)). The span at 240-255 (TSPKENTPVRSSSKNH) shows a compositional bias: polar residues. Disordered stretches follow at residues 240–269 (TSPK…PEKP) and 349–378 (SQQK…DRGL). Residues Ser391, Ser397, and Ser409 each carry the phosphoserine modification. Phosphothreonine is present on Thr433. The interval 444–470 (MHSHPSASNNSYATLGQSQTAAKRHAF) is disordered. The segment covering 448 to 464 (PSASNNSYATLGQSQTA) has biased composition (polar residues). Thr477 is subject to Phosphothreonine. The short motif at 497–500 (EVTV) is the PDZ-binding element.

This sequence belongs to the shisa family. In terms of assembly, component of the postsynaptic hippocampal AMPA-type glutamate receptor (AMPAR) complex, at least composed of pore forming AMPAR subunits GRIA1, GRIA2 and GRIA3 and AMPAR auxiliary proteins SHISA6 and SHISA7. Interacts (via PDZ-binding motif) with DLG4/PSD-95 (via PDZ domain); the interaction is direct. As to expression, expressed in the developing ventral mesencephalon.

It localises to the membrane. The protein resides in the postsynaptic density. In terms of biological role, involved in maintenance of high-frequency synaptic transmission at hippocampal CA3-CA1 synapses. Regulates AMPA-type glutamate receptor (AMPAR) immobilization at postsynaptic density keeping the channels in an activated state in the presence of glutamate and preventing synaptic depression. May play a role in self-renewal and differentiation of spermatogonial stem cells by inhibiting canonical Wnt signaling pathway. The polypeptide is Protein shisa-6 (Homo sapiens (Human)).